The sequence spans 282 residues: Cell cycle checkpoint protein RAD1 (282 aa).

Belongs to the rad1 family. In terms of assembly, component of the toroidal 9-1-1 (RAD9-RAD1-HUS1) complex, composed of RAD9A, RAD1 and HUS1. The 9-1-1 complex associates with LIG1, POLB, FEN1, RAD17, HDAC1, RPA1 and RPA2. The 9-1-1 complex associates with the RAD17-RFC complex. RAD1 interacts with POLB, FEN1, HUS1, HUS1B, RAD9A and RAD9B. Interacts with DNAJC7. Interacts with RHNO1; interaction is direct. Expressed in testis, uterus, bladder, spleen, ovaries, lung, brain and muscle (at protein level).

Its subcellular location is the nucleus. Its function is as follows. Component of the 9-1-1 cell-cycle checkpoint response complex that plays a major role in DNA repair. The 9-1-1 complex is recruited to DNA lesion upon damage by the RAD17-replication factor C (RFC) clamp loader complex. Acts then as a sliding clamp platform on DNA for several proteins involved in long-patch base excision repair (LP-BER). The 9-1-1 complex stimulates DNA polymerase beta (POLB) activity by increasing its affinity for the 3'-OH end of the primer-template and stabilizes POLB to those sites where LP-BER proceeds; endonuclease FEN1 cleavage activity on substrates with double, nick, or gap flaps of distinct sequences and lengths; and DNA ligase I (LIG1) on long-patch base excision repair substrates. The 9-1-1 complex is necessary for the recruitment of RHNO1 to sites of double-stranded breaks (DSB) occurring during the S phase. The protein is Cell cycle checkpoint protein RAD1 (RAD1) of Homo sapiens (Human).